Consider the following 209-residue polypeptide: Large ribosomal subunit protein uL3 (209 aa).

The disordered stretch occupies residues 126–148 (HGQSRGPMAHGSRYHRRPGSMGP).

This sequence belongs to the universal ribosomal protein uL3 family. As to quaternary structure, part of the 50S ribosomal subunit. Forms a cluster with proteins L14 and L19.

One of the primary rRNA binding proteins, it binds directly near the 3'-end of the 23S rRNA, where it nucleates assembly of the 50S subunit. The chain is Large ribosomal subunit protein uL3 from Listeria innocua serovar 6a (strain ATCC BAA-680 / CLIP 11262).